We begin with the raw amino-acid sequence, 302 residues long: Dioxygenase olcK (302 aa).

Positions 136, 138, and 213 each coordinate Fe cation.

Belongs to the PhyH family. In terms of assembly, homodimer. Fe cation serves as cofactor.

It localises to the peroxisome matrix. The protein operates within secondary metabolite biosynthesis; terpenoid biosynthesis. Dioxygenase; part of the gene cluster that mediates the biosynthesis of 15-deoxyoxalicine B. The first step of the pathway is the synthesis of nicotinyl-CoA from nicotinic acid by the nicotinic acid-CoA ligase olcI. Nicotinyl-CoA is then a substrate of polyketide synthase olcA to produce 4-hydroxy-6-(3-pyridinyl)-2H-pyran-2-one (HPPO) which is further prenylated by the polyprenyl transferase olcH to yield geranylgeranyl-HPPO. Geranylgeranyl pyrophosphate is provided by the cluster-specific geranylgeranyl pyrophosphate synthase olcC. The FAD-dependent monooxygenase olcE catalyzes the epoxidation of geranylgeranyl-HPPO and the terpene cyclase olcD catalyzes the cyclization of the terpenoid component, resulting in the formation of the tricyclic terpene moiety seen in predecaturin E. The cytochrome P450 monooxygenase then catalyzes the allylic oxidation of predecaturin E, which is followed by spirocylization with concomitant loss of one molecule of water to form decaturin E. Decaturin E is the substrate of the cytochrome P450 monooxygenase olcJ which hydroxylates it at the C-29 position to form decaturin F. The short-chain dehydrogenase/reductase olcF may catalyze the oxidation of decaturin F to generate the 29-hydroxyl-27-one intermediate, and subsequent hemiacetal formation probably leads to the formation of decaturin C. The dioxygenase olcK may be a peroxisomal enzyme that catalyzes the hydroxylation of decaturin C into decaturin A once decaturin C is shuttled into the peroxisome by the MFS transporter olcL. Finally the cytochrome P450 monooxygenase olcB catalyzes the oxidative rearrangement to yield 15-deoxyoxalicine B. In the absence of olcJ, decaturin E may be shunted to a pathway in which it is oxidized to a ketone, possibly by olcF, to form decaturin D, which undergoes further allylic oxidation to yield decaturin G. Moreover, in the absence of oclK or oclL, oclB can convert decaturin C into 15-deoxyoxalicine A. The sequence is that of Dioxygenase olcK from Penicillium canescens.